The primary structure comprises 434 residues: Adenylosuccinate synthetase (434 aa).

Residues 22-28 and 50-52 each bind GTP; these read GDEGKGK and GHT. Residue D23 is the Proton acceptor of the active site. Mg(2+) contacts are provided by D23 and G50. IMP contacts are provided by residues 23 to 26, 48 to 51, T139, R153, Q234, T249, and R313; these read DEGK and NAGH. H51 (proton donor) is an active-site residue. A substrate-binding site is contributed by 309-315; the sequence is ATTGRKR. Residues R315, 341 to 343, and 423 to 425 each bind GTP; these read KLD and SVG.

This sequence belongs to the adenylosuccinate synthetase family. As to quaternary structure, homodimer. Mg(2+) serves as cofactor.

It localises to the cytoplasm. It carries out the reaction IMP + L-aspartate + GTP = N(6)-(1,2-dicarboxyethyl)-AMP + GDP + phosphate + 2 H(+). It functions in the pathway purine metabolism; AMP biosynthesis via de novo pathway; AMP from IMP: step 1/2. Plays an important role in the de novo pathway of purine nucleotide biosynthesis. Catalyzes the first committed step in the biosynthesis of AMP from IMP. In Chlorobium luteolum (strain DSM 273 / BCRC 81028 / 2530) (Pelodictyon luteolum), this protein is Adenylosuccinate synthetase.